The primary structure comprises 90 residues: Small ribosomal subunit protein uS15c (90 aa).

It belongs to the universal ribosomal protein uS15 family. In terms of assembly, part of the 30S ribosomal subunit.

The protein localises to the plastid. It is found in the chloroplast. This is Small ribosomal subunit protein uS15c (rps15) from Mesostigma viride (Green alga).